We begin with the raw amino-acid sequence, 1364 residues long: Outer kinetochore KNL1 complex subunit spc7 (1364 aa).

The span at 1 to 15 (MPTSPRRNSIATTDN) shows a compositional bias: polar residues. Disordered stretches follow at residues 1–36 (MPTS…GALQ), 124–190 (YPKD…DIAS), and 202–223 (EALN…LSIQ). The segment covering 124–136 (YPKDHQSDSEKST) has biased composition (basic and acidic residues). Positions 157-169 (GPTTTSFSRNETQ) are enriched in polar residues. The span at 170 to 181 (SSPHSHSASIIS) shows a compositional bias: low complexity. Residues 254–257 (MDLT) carry the MELT; degenerate motif. Residue threonine 257 is modified to Phosphothreonine; by mph1. The interval 289-334 (ASHDPSNQTQLSSPNKSSSPTSIEISDFSKNNENHDQSENKEEEED) is disordered. Positions 300–310 (SSPNKSSSPTS) are enriched in low complexity. A compositionally biased stretch (basic and acidic residues) spans 318–328 (KNNENHDQSEN). The short motif at 450–453 (MDLT) is the MELT; degenerate element. Threonine 453 is subject to Phosphothreonine; by mph1. A disordered region spans residues 456–503 (ISSTNAPTHLNEDDLNQFTSNISSSSKPRKDNNKTANSSKPIPDSEDF). Positions 471-481 (NQFTSNISSSS) are enriched in polar residues. The MELT; degenerate motif lies at 504–507 (MDIT). Threonine 507 is subject to Phosphothreonine; by mph1. 2 disordered regions span residues 564-643 (LPSA…SSFD) and 697-837 (GATP…GVSN). Basic and acidic residues predominate over residues 566–585 (SADKENAEREEIPSYSDKSE). A compositionally biased stretch (polar residues) spans 586–617 (NFNTTSFTNHERSPNGNNNLKFSKDPNSSSPS). Positions 719–730 (EVSRQPTDDKGE) are enriched in basic and acidic residues. The segment covering 747–773 (LTIQQTNEIKHVPTNTTSSVKLPQQPS) has biased composition (polar residues). Positions 791 to 802 (SLERLESQEPNR) are enriched in basic and acidic residues. Over residues 808–820 (VGSSNAGNTTSVG) the composition is skewed to polar residues. A coiled-coil region spans residues 1075–1155 (LAQAQEKLEK…EEQLLNLKNE (81 aa)). The short motif at 1091–1105 (RRRRLLSEKEERRKE) is the Nuclear localization signal element.

In terms of assembly, component of the KNL1/SPC105 complex composed of at least spc7 and sos7. Part of the outer kinetochore KMN network that includes the KNL1, MIS12 and NDC80 complexes. Interacts (via C-terminus) with sos7 (via C-terminus); the interaction is direct. Interacts (when phosphorylated on MELT motifs) with bub1 and bub3; to recruit the BUB1-BUB3 complex to the kinetochore. Phosphorylation of threonine residues in the MELT motifs by mph1/mps1 leads to recruitment of bub1 and bub3 to the kinetochore, and is required to maintain spindle assembly checkpoint signaling.

The protein resides in the nucleus. It is found in the chromosome. Its subcellular location is the centromere. It localises to the kinetochore. Its function is as follows. Acts as a component of the outer kinetochore KNL1 complex that serves as a docking point for spindle assembly checkpoint components and mediates microtubule-kinetochore interactions. Kinetochores, consisting of a centromere-associated inner segment and a microtubule-contacting outer segment, play a crucial role in chromosome segregation by mediating the physical connection between centromeric DNA and spindle microtubules. The outer kinetochore is made up of the ten-subunit KMN network, comprising the MIS12, NDC80 and KNL1 complexes, and auxiliary microtubule-associated components; together they connect the outer kinetochore with the inner kinetochore, bind microtubules, and mediate interactions with mitotic checkpoint proteins that delay anaphase until chromosomes are bioriented on the spindle. Recruits the BUB1-BUB3 complex to kinetochores when phosphorylated by mph1/mps1, to support spindle assembly checkpoint signaling. Functions both in mitotic and in meiotic chromosome segregation. The chain is Outer kinetochore KNL1 complex subunit spc7 from Schizosaccharomyces pombe (strain 972 / ATCC 24843) (Fission yeast).